A 130-amino-acid polypeptide reads, in one-letter code: Fluoride-specific ion channel FluC (130 aa).

4 consecutive transmembrane segments (helical) span residues 2-22, 36-56, 71-91, and 100-120; these read GLLL…RFAL, GILL…AFLI, FLLV…SLDI, and IFIA…AVIL. Residues Gly-79 and Thr-82 each contribute to the Na(+) site.

This sequence belongs to the fluoride channel Fluc/FEX (TC 1.A.43) family.

Its subcellular location is the cell inner membrane. The catalysed reaction is fluoride(in) = fluoride(out). With respect to regulation, na(+) is not transported, but it plays an essential structural role and its presence is essential for fluoride channel function. Functionally, fluoride-specific ion channel. Important for reducing fluoride concentration in the cell, thus reducing its toxicity. The sequence is that of Fluoride-specific ion channel FluC from Francisella tularensis subsp. mediasiatica (strain FSC147).